A 322-amino-acid polypeptide reads, in one-letter code: Phosphatidylserine decarboxylase proenzyme (322 aa).

Active-site charge relay system; for autoendoproteolytic cleavage activity residues include aspartate 90, histidine 147, and serine 254. The active-site Schiff-base intermediate with substrate; via pyruvic acid; for decarboxylase activity is the serine 254. A Pyruvic acid (Ser); by autocatalysis modification is found at serine 254.

This sequence belongs to the phosphatidylserine decarboxylase family. PSD-B subfamily. Prokaryotic type I sub-subfamily. Heterodimer of a large membrane-associated beta subunit and a small pyruvoyl-containing alpha subunit. Pyruvate is required as a cofactor. Is synthesized initially as an inactive proenzyme. Formation of the active enzyme involves a self-maturation process in which the active site pyruvoyl group is generated from an internal serine residue via an autocatalytic post-translational modification. Two non-identical subunits are generated from the proenzyme in this reaction, and the pyruvate is formed at the N-terminus of the alpha chain, which is derived from the carboxyl end of the proenzyme. The autoendoproteolytic cleavage occurs by a canonical serine protease mechanism, in which the side chain hydroxyl group of the serine supplies its oxygen atom to form the C-terminus of the beta chain, while the remainder of the serine residue undergoes an oxidative deamination to produce ammonia and the pyruvoyl prosthetic group on the alpha chain. During this reaction, the Ser that is part of the protease active site of the proenzyme becomes the pyruvoyl prosthetic group, which constitutes an essential element of the active site of the mature decarboxylase.

Its subcellular location is the cell membrane. It carries out the reaction a 1,2-diacyl-sn-glycero-3-phospho-L-serine + H(+) = a 1,2-diacyl-sn-glycero-3-phosphoethanolamine + CO2. Its pathway is phospholipid metabolism; phosphatidylethanolamine biosynthesis; phosphatidylethanolamine from CDP-diacylglycerol: step 2/2. In terms of biological role, catalyzes the formation of phosphatidylethanolamine (PtdEtn) from phosphatidylserine (PtdSer). The sequence is that of Phosphatidylserine decarboxylase proenzyme from Shigella dysenteriae serotype 1 (strain Sd197).